Reading from the N-terminus, the 575-residue chain is Phosphoenolpyruvate-protein phosphotransferase (575 aa).

The active-site Tele-phosphohistidine intermediate is the His-189. Arg-296 and Arg-332 together coordinate phosphoenolpyruvate. Residues Glu-431 and Asp-455 each contribute to the Mg(2+) site. Residues Asn-454–Asp-455 and Arg-465 contribute to the phosphoenolpyruvate site. The Proton donor role is filled by Cys-502.

The protein belongs to the PEP-utilizing enzyme family. As to quaternary structure, homodimer. The cofactor is Mg(2+).

Its subcellular location is the cytoplasm. It carries out the reaction L-histidyl-[protein] + phosphoenolpyruvate = N(pros)-phospho-L-histidyl-[protein] + pyruvate. In terms of biological role, general (non sugar-specific) component of the phosphoenolpyruvate-dependent sugar phosphotransferase system (sugar PTS). This major carbohydrate active-transport system catalyzes the phosphorylation of incoming sugar substrates concomitantly with their translocation across the cell membrane. Enzyme I transfers the phosphoryl group from phosphoenolpyruvate (PEP) to the phosphoryl carrier protein (HPr). This Salmonella typhimurium (strain LT2 / SGSC1412 / ATCC 700720) protein is Phosphoenolpyruvate-protein phosphotransferase (ptsI).